We begin with the raw amino-acid sequence, 443 residues long: Thymidine phosphorylase (443 aa).

This sequence belongs to the thymidine/pyrimidine-nucleoside phosphorylase family. As to quaternary structure, homodimer.

It catalyses the reaction thymidine + phosphate = 2-deoxy-alpha-D-ribose 1-phosphate + thymine. It functions in the pathway pyrimidine metabolism; dTMP biosynthesis via salvage pathway; dTMP from thymine: step 1/2. Its function is as follows. The enzymes which catalyze the reversible phosphorolysis of pyrimidine nucleosides are involved in the degradation of these compounds and in their utilization as carbon and energy sources, or in the rescue of pyrimidine bases for nucleotide synthesis. The chain is Thymidine phosphorylase from Aeromonas salmonicida (strain A449).